The primary structure comprises 623 residues: Low affinity potassium transport system protein Kup (623 aa).

Transmembrane regions (helical) follow at residues 10-30, 47-67, 102-122, 138-158, 166-186, 214-234, 248-268, 277-297, 338-358, 364-384, 396-416, and 420-440; these read LSAVTLAAIGVVYGDIGTSPL, PDVVFGFLSLIFWMLILIVSV, ILVILGLIGGSFFYGEVVITP, PALDPYIVPCSIAVLTLLFVI, VGKLFAPVMLVWFLTLALLGL, VSFFALGAVVLAITGVEALYA, WFTVVLPSLVLNYFGQGALLL, PFFLLAPDWALIPLLILATLA, IYIPVINWTLYLAVVLVIVGF, LAAAYGIAVTGTMVITSVLFC, FFVYFLLVALLVIDVPMFSAN, and LFSGGWLPLSLGLVMFIIMTT.

The protein belongs to the HAK/KUP transporter (TC 2.A.72) family.

It is found in the cell inner membrane. It catalyses the reaction K(+)(in) + H(+)(in) = K(+)(out) + H(+)(out). Its function is as follows. Responsible for the low-affinity transport of potassium into the cell. Likely operates as a K(+):H(+) symporter. This is Low affinity potassium transport system protein Kup from Yersinia enterocolitica serotype O:8 / biotype 1B (strain NCTC 13174 / 8081).